The following is a 92-amino-acid chain: Small ribosomal subunit protein uS19 (92 aa).

Belongs to the universal ribosomal protein uS19 family.

Its function is as follows. Protein S19 forms a complex with S13 that binds strongly to the 16S ribosomal RNA. The chain is Small ribosomal subunit protein uS19 from Tolumonas auensis (strain DSM 9187 / NBRC 110442 / TA 4).